A 311-amino-acid polypeptide reads, in one-letter code: E3 ubiquitin-protein ligase RNF126 (311 aa).

Residues Cys-13, Cys-16, Cys-29, and Cys-32 each coordinate Zn(2+). Residues 13–32 (CHSCTAEIIPRLPEYTCPRC) form a C4-type zinc finger. 2 disordered regions span residues 42 to 62 (ETRN…NRPS) and 95 to 133 (GTSG…RRAA). Positions 101–114 (EEPRDGESRREHQS) are enriched in basic and acidic residues. Basic residues predominate over residues 123 to 133 (PRARLSTRRAA). The RING-type zinc-finger motif lies at 227–268 (CPVCKEDYTVGESVRQLPCNHLFHNDCIIPWLEQHDTCPVCR). The segment at 274–311 (QNTATNPPGLTEMTFSSSSTSSSSSTSPTDENNAANNS) is disordered. The segment covering 289 to 300 (SSSSTSSSSSTS) has biased composition (low complexity). A compositionally biased stretch (polar residues) spans 301-311 (PTDENNAANNS).

It is found in the cytoplasm. It localises to the nucleus. It catalyses the reaction S-ubiquitinyl-[E2 ubiquitin-conjugating enzyme]-L-cysteine + [acceptor protein]-L-lysine = [E2 ubiquitin-conjugating enzyme]-L-cysteine + N(6)-ubiquitinyl-[acceptor protein]-L-lysine.. It participates in protein modification; protein ubiquitination. Its function is as follows. E3 ubiquitin-protein ligase that mediates ubiquitination oF target proteins. Depending on the associated E2 ligase, mediates 'Lys-27'-, 'Lys-29'-, 'Lys-48'- and/or 'Lys-63'-linked polyubiquitination of substrates. Part of a BAG6-dependent quality control process ensuring that proteins of the secretory pathway that are mislocalized to the cytosol are degraded by the proteasome. Probably acts by providing the ubiquitin ligase activity associated with the BAG6 complex and be responsible for ubiquitination of the hydrophobic mislocalized proteins and their targeting to the proteasome. This chain is E3 ubiquitin-protein ligase RNF126, found in Xenopus tropicalis (Western clawed frog).